Consider the following 143-residue polypeptide: MSHDSDDKTYPYQKDDAELRRRLTPMQYEVTQHAATERAFTGEYTDTEDAGIYKCVVCSTPLFESGAKFHSGCGWPSYFKPLNGEVIDEKIDRSHGMVRVEVRCNHCGAHLGHVFEDGPRDQTGLRYCINSAALNFESRPENE.

Residues 16–139 (DAELRRRLTP…NSAALNFESR (124 aa)) enclose the MsrB domain. Positions 55, 58, 104, and 107 each coordinate Zn(2+). Cys-128 functions as the Nucleophile in the catalytic mechanism.

This sequence belongs to the MsrB Met sulfoxide reductase family. Requires Zn(2+) as cofactor.

The catalysed reaction is L-methionyl-[protein] + [thioredoxin]-disulfide + H2O = L-methionyl-(R)-S-oxide-[protein] + [thioredoxin]-dithiol. The protein is Peptide methionine sulfoxide reductase MsrB of Burkholderia vietnamiensis (strain G4 / LMG 22486) (Burkholderia cepacia (strain R1808)).